The chain runs to 457 residues: Acetylcholine receptor subunit alpha (457 aa).

The first 20 residues, 1 to 20 (MEPRPLLLLLGLCSAGLVLG), serve as a signal peptide directing secretion. At 21–230 (SEHETRLVAK…ITYHFVMQRL (210 aa)) the chain is on the extracellular side. Intrachain disulfides connect C148–C162 and C212–C213. The N-linked (GlcNAc...) asparagine glycan is linked to N161. A run of 3 helical transmembrane segments spans residues 231 to 255 (PLYFIVNVIIPCLLFSFLTGLVFYL), 263 to 281 (MTLSISVLLSLTVFLLVIV), and 297 to 316 (YMLFTMVFVIASIIITVIVI). The Cytoplasmic segment spans residues 317–428 (NTHHRSPSTH…WKYVAMVMDH (112 aa)). The helical transmembrane segment at 429-447 (ILLAVFMLVCIIGTLAVFA) threads the bilayer.

The protein belongs to the ligand-gated ion channel (TC 1.A.9) family. Acetylcholine receptor (TC 1.A.9.1) subfamily. Alpha-1/CHRNA1 sub-subfamily. As to quaternary structure, one of the alpha chains that assemble within the acetylcholine receptor, a pentamer of two alpha chains, a beta, a delta, and a gamma (in immature muscle) or epsilon (in mature muscle) chains. The muscle heteropentamer composed of alpha-1, beta-1, delta, epsilon subunits interacts with the alpha-conotoxin ImII.

The protein resides in the postsynaptic cell membrane. Its subcellular location is the cell membrane. It catalyses the reaction K(+)(in) = K(+)(out). The enzyme catalyses Na(+)(in) = Na(+)(out). Functionally, upon acetylcholine binding, the AChR responds by an extensive change in conformation that affects all subunits and leads to opening of an ion-conducting channel across the plasma membrane. The protein is Acetylcholine receptor subunit alpha (CHRNA1) of Bos taurus (Bovine).